A 432-amino-acid polypeptide reads, in one-letter code: Anaerobic glycerol-3-phosphate dehydrogenase subunit B (432 aa).

The protein belongs to the anaerobic G-3-P dehydrogenase subunit B family. In terms of assembly, composed of a catalytic GlpA/B dimer and of membrane bound GlpC. Requires FMN as cofactor.

It carries out the reaction a quinone + sn-glycerol 3-phosphate = dihydroxyacetone phosphate + a quinol. It functions in the pathway polyol metabolism; glycerol degradation via glycerol kinase pathway; glycerone phosphate from sn-glycerol 3-phosphate (anaerobic route): step 1/1. Conversion of glycerol 3-phosphate to dihydroxyacetone. Uses fumarate or nitrate as electron acceptor. This chain is Anaerobic glycerol-3-phosphate dehydrogenase subunit B, found in Haemophilus influenzae (strain PittGG).